Consider the following 68-residue polypeptide: MEKQFNVWSVQNDIVCQRQLTINLRRVRNEYDNAVASVAAPSCPPSIPAQTRTCGRKLKLDWFKCTIL.

This is an uncharacterized protein from Invertebrate iridescent virus 3 (IIV-3).